Consider the following 912-residue polypeptide: Glutamate receptor 3.2 (912 aa).

Positions 1 to 22 are cleaved as a signal peptide; it reads MFWVLVLLSFIVLIGDGMISEG. The Extracellular portion of the chain corresponds to 23-587; the sequence is AGLRPRYVDV…TPWAFLRPFT (565 aa). N-linked (GlcNAc...) asparagine glycosylation is found at asparagine 306, asparagine 338, asparagine 378, asparagine 417, asparagine 435, asparagine 445, and asparagine 532. Glycine contacts are provided by residues 544–546 and arginine 551; that span reads DIA. Residues 544 to 546 and arginine 551 each bind L-methionine; that span reads DIA. The chain crosses the membrane as a helical span at residues 588–608; the sequence is PPMWAVTAAFFLIVGSVIWIL. The Cytoplasmic portion of the chain corresponds to 609 to 617; the sequence is EHRINDEFR. Residues 618–638 traverse the membrane as a helical segment; that stretch reads GPPRKQIVTILWFSFSTMFFS. Residues 639-649 are Cytoplasmic-facing; the sequence is HRENTVSTLGR. The helical transmembrane segment at 650 to 670 threads the bilayer; it reads AVLLIWLFVVLIITSSYTASL. The Extracellular portion of the chain corresponds to 671 to 828; sequence TSILTVQQLN…EDSEQLKLRS (158 aa). A glycine-binding site is contributed by tyrosine 703. An L-methionine-binding site is contributed by tyrosine 703. An N-linked (GlcNAc...) asparagine glycan is attached at asparagine 734. 743–746 lines the glycine pocket; the sequence is ERPY. 743–746 provides a ligand contact to L-methionine; it reads ERPY. A disulfide bridge links cysteine 755 with cysteine 809. Asparagine 808 and asparagine 813 each carry an N-linked (GlcNAc...) asparagine glycan. Residues 829 to 849 form a helical membrane-spanning segment; it reads FWGLFLVCGISCFIALFIYFF. Residues 850 to 912 are Cytoplasmic-facing; the sequence is KIVRDFFRHG…DLSLKPSRPI (63 aa). The tract at residues 888–912 is disordered; that stretch reads KEDESKRRMKRKRNDDLSLKPSRPI.

Belongs to the glutamate-gated ion channel (TC 1.A.10.1) family. Forms a heteromeric channel with GLR3.4. As to expression, expressed in leaves and siliques, and at lower level in flowers and roots. Detected in the vascular tissues of both shoots and roots. Expressed in root phloem.

It localises to the cell membrane. Glutamate-gated receptor that probably acts as a non-selective cation channel. May be involved in light-signal transduction and calcium homeostasis via the regulation of calcium influx into cells. Could play a role in calcium unloading from the xylem vessels. Acts as a negative regulator of lateral root initiation and development. May restrict primordia numbers and position along the root axis by a signaling process originating in the phloem. This chain is Glutamate receptor 3.2, found in Arabidopsis thaliana (Mouse-ear cress).